Here is a 287-residue protein sequence, read N- to C-terminus: ATP phosphoribosyltransferase (287 aa).

Belongs to the ATP phosphoribosyltransferase family. Long subfamily. As to quaternary structure, equilibrium between an active dimeric form, an inactive hexameric form and higher aggregates. Interconversion between the various forms is largely reversible and is influenced by the natural substrates and inhibitors of the enzyme. The cofactor is Mg(2+).

The protein resides in the cytoplasm. It carries out the reaction 1-(5-phospho-beta-D-ribosyl)-ATP + diphosphate = 5-phospho-alpha-D-ribose 1-diphosphate + ATP. It participates in amino-acid biosynthesis; L-histidine biosynthesis; L-histidine from 5-phospho-alpha-D-ribose 1-diphosphate: step 1/9. Feedback inhibited by histidine. Catalyzes the condensation of ATP and 5-phosphoribose 1-diphosphate to form N'-(5'-phosphoribosyl)-ATP (PR-ATP). Has a crucial role in the pathway because the rate of histidine biosynthesis seems to be controlled primarily by regulation of HisG enzymatic activity. The sequence is that of ATP phosphoribosyltransferase (hisG) from Mycobacterium leprae (strain TN).